A 132-amino-acid chain; its full sequence is Small ribosomal subunit protein uS19 (132 aa).

The protein belongs to the universal ribosomal protein uS19 family.

Its function is as follows. Protein S19 forms a complex with S13 that binds strongly to the 16S ribosomal RNA. This Korarchaeum cryptofilum (strain OPF8) protein is Small ribosomal subunit protein uS19.